The primary structure comprises 216 residues: Peroxiredoxin (216 aa).

The 157-residue stretch at 2 to 158 (VVIGEKFPEV…ILRLVKALKI (157 aa)) folds into the Thioredoxin domain. Catalysis depends on Cys46, which acts as the Cysteine sulfenic acid (-SOH) intermediate. A substrate-binding site is contributed by Arg121. The cysteines at positions 205 and 211 are disulfide-linked.

Belongs to the peroxiredoxin family. Prx6 subfamily. Homodecamer. Pentamer of dimers that assemble into a ring structure.

It is found in the cytoplasm. It catalyses the reaction a hydroperoxide + [thioredoxin]-dithiol = an alcohol + [thioredoxin]-disulfide + H2O. Thiol-specific peroxidase that catalyzes the reduction of hydrogen peroxide and organic hydroperoxides to water and alcohols, respectively. Plays a role in cell protection against oxidative stress by detoxifying peroxides. This chain is Peroxiredoxin, found in Pyrococcus abyssi (strain GE5 / Orsay).